The primary structure comprises 959 residues: Oxysterol-binding protein-related protein 6 (959 aa).

The disordered stretch occupies residues Met-1–Pro-60. Ser-2 carries the N-acetylserine modification. Residues Thr-14–Gln-29 show a composition bias toward low complexity. Residues Arg-30–Glu-40 show a composition bias toward basic and acidic residues. Position 35 is a phosphoserine (Ser-35). Polar residues predominate over residues Thr-42–Arg-53. The region spanning Pro-86–Leu-181 is the PH domain. Ser-190 and Ser-290 each carry phosphoserine.

The protein belongs to the OSBP family. In terms of assembly, homodimer. Interacts with OSBPL3. Expressed in skin, respiratory epithelium, small intestine epithelium, pancreas, striated muscle, brain, spinal ganglia, and nervous plexus of the intestine (at protein level). In the brain, specifically in the cerebellum, it is expressed in Purkinje and granule cells. Expressed in hepatocytes and macrophages.

It is found in the nucleus envelope. The protein localises to the cytoplasm. It localises to the cytosol. The protein resides in the endoplasmic reticulum membrane. Its subcellular location is the cell membrane. It is found in the endosome membrane. Functionally, regulates cellular transport and efflux of cholesterol. Plays a role in phosphatidylinositol-4-phophate (PI4P) turnover at the neuronal membrane. Binds via its PH domain PI4P, phosphatidylinositol-4,5-diphosphate, phosphatidylinositol-3,4,5-triphosphate, and phosphatidic acid. Weakly binds 25-hydroxycholesterol. In Mus musculus (Mouse), this protein is Oxysterol-binding protein-related protein 6 (Osbpl6).